Consider the following 183-residue polypeptide: Large ribosomal subunit protein eL18 (183 aa).

The tract at residues 150–183 (RHFGPAPGAPRSHTKPYVRTKGHEKARPSRRANV) is disordered.

The protein belongs to the eukaryotic ribosomal protein eL18 family.

It is found in the cytoplasm. The protein is Large ribosomal subunit protein eL18 (RpL18) of Bombyx mori (Silk moth).